Consider the following 151-residue polypeptide: Protein NrdI (151 aa).

This sequence belongs to the NrdI family.

Its function is as follows. Probably involved in ribonucleotide reductase function. The polypeptide is Protein NrdI (Mycoplasmopsis pulmonis (strain UAB CTIP) (Mycoplasma pulmonis)).